Here is a 222-residue protein sequence, read N- to C-terminus: TPR repeat-containing protein BH2049 (222 aa).

2 TPR repeats span residues Ala34–His67 and Pro169–Lys202.

In Halalkalibacterium halodurans (strain ATCC BAA-125 / DSM 18197 / FERM 7344 / JCM 9153 / C-125) (Bacillus halodurans), this protein is TPR repeat-containing protein BH2049.